Here is a 341-residue protein sequence, read N- to C-terminus: MLDNIKIKLQYWLPKIWLTRLAGWGANKRAGKLTKLVIDLFVRQYHVNMQEALQPDTASYRTFNEFFVRPLRPGIRPVDPHAHRLVQPADGVLSQFGPITDGKLIQAKNHDYTLEALLAGNYMMADLFRDGLFATIYLSPRDYHRLHMPCDGVLREMIYVPGDLFSVNLLTADNVPNLFARNERVICLFDTEFGPLAQILVGATIVGSIETVWAGVVTPPREGIIKRWTYPQAGEEGAVVLAKGEEMGRFKLGSTVINLFTAGDLQFAAHLNIMSVTRMGEPFAEVRQDEQTPVVFPEGTELEENDAAQPPVAATSEPVQADGQNPAAEVSGQTGHKPDAP.

Catalysis depends on charge relay system; for autoendoproteolytic cleavage activity residues Asp-90, His-147, and Ser-254. Ser-254 (schiff-base intermediate with substrate; via pyruvic acid; for decarboxylase activity) is an active-site residue. Ser-254 is modified (pyruvic acid (Ser); by autocatalysis). The segment at 287–341 (RQDEQTPVVFPEGTELEENDAAQPPVAATSEPVQADGQNPAAEVSGQTGHKPDAP) is disordered.

The protein belongs to the phosphatidylserine decarboxylase family. PSD-B subfamily. Prokaryotic type I sub-subfamily. In terms of assembly, heterodimer of a large membrane-associated beta subunit and a small pyruvoyl-containing alpha subunit. The cofactor is pyruvate. Post-translationally, is synthesized initially as an inactive proenzyme. Formation of the active enzyme involves a self-maturation process in which the active site pyruvoyl group is generated from an internal serine residue via an autocatalytic post-translational modification. Two non-identical subunits are generated from the proenzyme in this reaction, and the pyruvate is formed at the N-terminus of the alpha chain, which is derived from the carboxyl end of the proenzyme. The autoendoproteolytic cleavage occurs by a canonical serine protease mechanism, in which the side chain hydroxyl group of the serine supplies its oxygen atom to form the C-terminus of the beta chain, while the remainder of the serine residue undergoes an oxidative deamination to produce ammonia and the pyruvoyl prosthetic group on the alpha chain. During this reaction, the Ser that is part of the protease active site of the proenzyme becomes the pyruvoyl prosthetic group, which constitutes an essential element of the active site of the mature decarboxylase.

The protein resides in the cell membrane. The enzyme catalyses a 1,2-diacyl-sn-glycero-3-phospho-L-serine + H(+) = a 1,2-diacyl-sn-glycero-3-phosphoethanolamine + CO2. It functions in the pathway phospholipid metabolism; phosphatidylethanolamine biosynthesis; phosphatidylethanolamine from CDP-diacylglycerol: step 2/2. In terms of biological role, catalyzes the formation of phosphatidylethanolamine (PtdEtn) from phosphatidylserine (PtdSer). The sequence is that of Phosphatidylserine decarboxylase proenzyme from Pectobacterium atrosepticum (strain SCRI 1043 / ATCC BAA-672) (Erwinia carotovora subsp. atroseptica).